Here is a 90-residue protein sequence, read N- to C-terminus: Small regulatory polypeptide of amino acid response (90 aa).

Over 1 to 18 (MGAKAPRGPKVAQWAMET) the chain is Lumenal. The chain crosses the membrane as a helical span at residues 19–39 (AVIGVVVVLFVVTVAITCVLC). Residues 40–90 (CFSCDSRAQDPQGGPGRSFTVATFRQEASLFTGPVRHAQPVPSAQDFWTFM) are Cytoplasmic-facing.

In terms of assembly, interacts with components of the lysosomal V-ATPase complex. Interacts with ATP6V0A1. Interacts with ATP6V0A2. Highly expressed in lung, heart and skeletal muscle.

The protein localises to the late endosome membrane. Its subcellular location is the lysosome membrane. Negative regulator of amino acid sensing and mTORC1, a signaling complex promoting cell growth in response to growth factors, energy levels and amino acids. Negatively regulates mTORC1 activation by inhibiting recruitment of mTORC1 to lysosomes upon stimulation with amino acids: acts by promoting the formation of a tightly bound supercomplex composed of the lysosomal V-ATPase, Ragulator and Rag GTPases, preventing recruitment of mTORC1. Acts as a regulator of muscle regeneration following injury by regulating mTORC1 activation. The protein is Small regulatory polypeptide of amino acid response of Homo sapiens (Human).